Here is a 426-residue protein sequence, read N- to C-terminus: Proline--tRNA ligase (426 aa).

It belongs to the class-II aminoacyl-tRNA synthetase family. ProS type 2 subfamily. As to quaternary structure, homodimer.

The protein localises to the cytoplasm. The enzyme catalyses tRNA(Pro) + L-proline + ATP = L-prolyl-tRNA(Pro) + AMP + diphosphate. Functionally, catalyzes the attachment of proline to tRNA(Pro) in a two-step reaction: proline is first activated by ATP to form Pro-AMP and then transferred to the acceptor end of tRNA(Pro). This Rickettsia rickettsii (strain Iowa) protein is Proline--tRNA ligase.